The primary structure comprises 251 residues: MNERVKQVASALVDAIQKTLTEQRVTEEEWRAGVGYMMKLAEAKEVAVLLDAFFNHTIVDLKAQATRGSRPAMQGPYFLEGAPVVAGALKTYEDDSHHPLVIRGAVRTDDGAPAAGAVIDVWHSTPDGKYSGIHDQIPTDMYRGKVVADAQGKYAVRTTMPAPYQIPNKGPTGVLLEMMGSHTWRPAHVHFKVRKDGFAPLTTQYYFEGGDWVDSDCCKGVAPDLVMPTKTEGGAQVMDIDFVIERAREHV.

4 residues coordinate Fe cation: tyrosine 130, tyrosine 164, histidine 188, and histidine 190.

This sequence belongs to the intradiol ring-cleavage dioxygenase family. Requires Fe(3+) as cofactor.

It catalyses the reaction 3-chlorocatechol + O2 = (2E,4Z)-2-chloromuconate + 2 H(+). The enzyme catalyses 3,4-dichlorocatechol + O2 = (2Z,4Z)-2,3-dichloromuconate + 2 H(+). It carries out the reaction 3,5-dichlorocatechol + O2 = (2E,4E)-2,4-dichloromuconate + 2 H(+). The catalysed reaction is 3,6-dichlorocatechol + O2 = (2E,4E)-2,5-dichloromuconate + H(+). It catalyses the reaction 3,4,6-trichlorocatechol + O2 = (2Z,4E)-2,3,5-trichloromuconate + H(+). The protein operates within xenobiotic degradation. Its function is as follows. Chlorocatechol 1,2-dioxygenase involved in the degradation of chlorinated benzenes, that occurs via chlorocatechol intermediates. Displays broad substrate specificity. Preferentially cleaves 3-chlorocatechol and 3,4-dichlorocatechol, and shows lower activity on 3,5-dichlorocatechol, 3,6-dichlorocatechol and 3,4,6-trichlorocatechol in vitro. Is not able to convert 3,4,5-trichlorocatechol and 3,4,5,6-tetrachlorocatechol. Thus, probably functions in the degradation pathways of 1,2-dichlorobenzene, 1,4-dichlorobenzene and 1,2,4-trichlorobenzene (via 3,4-dichlorocatechol, 3,6-dichlorocatechol and 3,4,6-trichlorocatechol intermediates, respectively), which allow Pseudomonas sp. strain P51 to grow on these substrates as the sole carbon and energy source. This chain is Chlorocatechol 1,2-dioxygenase, found in Pseudomonas sp. (strain P51).